Consider the following 119-residue polypeptide: uncharacterized protein (119 aa).

Helical transmembrane passes span 3–23 (WVFL…MKLS), 29–49 (LIPS…LTLT), 58–78 (AYAV…FLFF), and 87–107 (VISI…EHVA).

It belongs to the drug/metabolite transporter (DMT) superfamily. Small multidrug resistance (SMR) (TC 2.A.7.1) family.

It localises to the cell membrane. This is an uncharacterized protein from Bacillus subtilis (strain 168).